The following is a 143-amino-acid chain: Transcriptional regulator MraZ (143 aa).

SpoVT-AbrB domains lie at Thr6–Glu49 and Ser78–Val121.

Belongs to the MraZ family. Forms oligomers.

It localises to the cytoplasm. The protein resides in the nucleoid. The protein is Transcriptional regulator MraZ of Spiroplasma kunkelii.